Here is a 486-residue protein sequence, read N- to C-terminus: tRNA (uracil-5-)-methyltransferase homolog B (486 aa).

3 residues coordinate S-adenosyl-L-methionine: Gln305, Glu355, and Asn405. Cys433 functions as the Nucleophile in the catalytic mechanism. Residue Glu479 is the Proton acceptor of the active site.

The protein belongs to the class I-like SAM-binding methyltransferase superfamily. RNA M5U methyltransferase family.

It localises to the mitochondrion matrix. The enzyme catalyses uridine(54) in tRNA + S-adenosyl-L-methionine = 5-methyluridine(54) in tRNA + S-adenosyl-L-homocysteine + H(+). The catalysed reaction is a uridine in 12S rRNA + S-adenosyl-L-methionine = a 5-methyluridine in 12S rRNA + S-adenosyl-L-homocysteine + H(+). Functionally, mitochondrial S-adenosyl-L-methionine-dependent methyltransferase that catalyzes the formation of 5-methyl-uridine in tRNAs and 12S rRNA. Catalyzes the methylation of uridine at position 54 (m5U54) in all tRNAs. Specifically methylates the uridine in position 429 of 12S rRNA (m5U429). Does not affect RNA stability or mitochondrial translation. The sequence is that of tRNA (uracil-5-)-methyltransferase homolog B (TRMT2B) from Pongo abelii (Sumatran orangutan).